Reading from the N-terminus, the 130-residue chain is Small ribosomal subunit protein uS9 (130 aa).

This sequence belongs to the universal ribosomal protein uS9 family.

In Stenotrophomonas maltophilia (strain R551-3), this protein is Small ribosomal subunit protein uS9.